A 155-amino-acid polypeptide reads, in one-letter code: 6,7-dimethyl-8-ribityllumazine synthase (155 aa).

5-amino-6-(D-ribitylamino)uracil is bound by residues Phe-24, 58 to 60, and 82 to 84; these read AFE and AII. 87 to 88 provides a ligand contact to (2S)-2-hydroxy-3-oxobutyl phosphate; it reads ST. His-90 serves as the catalytic Proton donor. Phe-115 contributes to the 5-amino-6-(D-ribitylamino)uracil binding site. Arg-129 contacts (2S)-2-hydroxy-3-oxobutyl phosphate.

The protein belongs to the DMRL synthase family.

It catalyses the reaction (2S)-2-hydroxy-3-oxobutyl phosphate + 5-amino-6-(D-ribitylamino)uracil = 6,7-dimethyl-8-(1-D-ribityl)lumazine + phosphate + 2 H2O + H(+). It functions in the pathway cofactor biosynthesis; riboflavin biosynthesis; riboflavin from 2-hydroxy-3-oxobutyl phosphate and 5-amino-6-(D-ribitylamino)uracil: step 1/2. Functionally, catalyzes the formation of 6,7-dimethyl-8-ribityllumazine by condensation of 5-amino-6-(D-ribitylamino)uracil with 3,4-dihydroxy-2-butanone 4-phosphate. This is the penultimate step in the biosynthesis of riboflavin. This is 6,7-dimethyl-8-ribityllumazine synthase from Chlorobium phaeobacteroides (strain BS1).